The following is a 655-amino-acid chain: p-hydroxybenzoic acid efflux pump subunit AaeB (655 aa).

A run of 11 helical transmembrane segments spans residues 13–33, 38–58, 69–89, 93–113, 121–141, 152–172, 370–390, 407–427, 431–451, 455–475, and 482–502; these read FAVKLATAIVLALFVGFHFQL, WAVLTAAIVAAGPAFAAGGEP, LRIIGTFIGCIAGLVIIIAMI, LLMILVCCIWAGFCTWISSLV, WGLAGYTALIIVITIQPEPLL, EIVIGIVCAIIADLLFSPRSI, LFWLWTGWTSGSGAMVMIAVV, FIYGTLAALPLGLLYFLVIIP, QSMLLLCISLAVLGFFLGIEV, LLGSMGALASTINIIVLDNPM, and FLDSALGQIVGCVLAFTVILL.

This sequence belongs to the aromatic acid exporter ArAE (TC 2.A.85) family.

Its subcellular location is the cell inner membrane. Functionally, forms an efflux pump with AaeA. Could function as a metabolic relief valve, allowing to eliminate certain compounds when they accumulate to high levels in the cell. This chain is p-hydroxybenzoic acid efflux pump subunit AaeB, found in Shigella boydii serotype 4 (strain Sb227).